A 484-amino-acid polypeptide reads, in one-letter code: Probable cytochrome P450 316a1 (484 aa).

Cys-433 contributes to the heme binding site.

It belongs to the cytochrome P450 family. Heme serves as cofactor.

The protein resides in the endoplasmic reticulum membrane. The protein localises to the microsome membrane. In terms of biological role, may be involved in the metabolism of insect hormones and in the breakdown of synthetic insecticides. This is Probable cytochrome P450 316a1 (Cyp316a1) from Drosophila melanogaster (Fruit fly).